The following is a 438-amino-acid chain: 3-phosphoshikimate 1-carboxyvinyltransferase (438 aa).

Positions 21, 22, and 26 each coordinate 3-phosphoshikimate. Lys21 contacts phosphoenolpyruvate. The phosphoenolpyruvate site is built by Gly95 and Arg123. 3-phosphoshikimate is bound by residues Ser167, Gln169, Asp315, and Lys342. Gln169 contributes to the phosphoenolpyruvate binding site. Asp315 serves as the catalytic Proton acceptor. Arg346 and Arg387 together coordinate phosphoenolpyruvate.

This sequence belongs to the EPSP synthase family. Monomer.

The protein localises to the cytoplasm. It catalyses the reaction 3-phosphoshikimate + phosphoenolpyruvate = 5-O-(1-carboxyvinyl)-3-phosphoshikimate + phosphate. The protein operates within metabolic intermediate biosynthesis; chorismate biosynthesis; chorismate from D-erythrose 4-phosphate and phosphoenolpyruvate: step 6/7. Functionally, catalyzes the transfer of the enolpyruvyl moiety of phosphoenolpyruvate (PEP) to the 5-hydroxyl of shikimate-3-phosphate (S3P) to produce enolpyruvyl shikimate-3-phosphate and inorganic phosphate. This is 3-phosphoshikimate 1-carboxyvinyltransferase from Coxiella burnetii (strain CbuG_Q212) (Coxiella burnetii (strain Q212)).